The sequence spans 482 residues: Glutamate--tRNA ligase (482 aa).

The short motif at 9–19 is the 'HIGH' region element; it reads PSPTGYLHIGG. The 'KMSKS' region signature appears at 252-256; the sequence is KLSKR. Residue K255 participates in ATP binding.

This sequence belongs to the class-I aminoacyl-tRNA synthetase family. Glutamate--tRNA ligase type 1 subfamily. As to quaternary structure, monomer.

The protein resides in the cytoplasm. The catalysed reaction is tRNA(Glu) + L-glutamate + ATP = L-glutamyl-tRNA(Glu) + AMP + diphosphate. In terms of biological role, catalyzes the attachment of glutamate to tRNA(Glu) in a two-step reaction: glutamate is first activated by ATP to form Glu-AMP and then transferred to the acceptor end of tRNA(Glu). The chain is Glutamate--tRNA ligase from Ureaplasma parvum serovar 3 (strain ATCC 27815 / 27 / NCTC 11736).